We begin with the raw amino-acid sequence, 149 residues long: Protein AIM7 (149 aa).

Serine 2 is modified (N-acetylserine). Residues 3-147 (NLYKIGTETR…DVEELREQLE (145 aa)) form the ADF-H domain. Serine 137 carries the post-translational modification Phosphoserine.

It belongs to the actin-binding proteins ADF family. GMF subfamily.

The protein resides in the cytoplasm. It is found in the nucleus. May be involved in mitochondrial organization and biogenesis. The protein is Protein AIM7 (AIM7) of Saccharomyces cerevisiae (strain ATCC 204508 / S288c) (Baker's yeast).